A 229-amino-acid chain; its full sequence is 5'-methylthioadenosine/S-adenosylhomocysteine nucleosidase (229 aa).

E12 acts as the Proton acceptor in catalysis. Residues G78, I152, and 173 to 174 (ME) contribute to the substrate site. Catalysis depends on D197, which acts as the Proton donor.

Belongs to the PNP/UDP phosphorylase family. MtnN subfamily.

The enzyme catalyses S-adenosyl-L-homocysteine + H2O = S-(5-deoxy-D-ribos-5-yl)-L-homocysteine + adenine. It catalyses the reaction S-methyl-5'-thioadenosine + H2O = 5-(methylsulfanyl)-D-ribose + adenine. The catalysed reaction is 5'-deoxyadenosine + H2O = 5-deoxy-D-ribose + adenine. The protein operates within amino-acid biosynthesis; L-methionine biosynthesis via salvage pathway; S-methyl-5-thio-alpha-D-ribose 1-phosphate from S-methyl-5'-thioadenosine (hydrolase route): step 1/2. In terms of biological role, catalyzes the irreversible cleavage of the glycosidic bond in both 5'-methylthioadenosine (MTA) and S-adenosylhomocysteine (SAH/AdoHcy) to adenine and the corresponding thioribose, 5'-methylthioribose and S-ribosylhomocysteine, respectively. Also cleaves 5'-deoxyadenosine, a toxic by-product of radical S-adenosylmethionine (SAM) enzymes, into 5-deoxyribose and adenine. This Histophilus somni (strain 2336) (Haemophilus somnus) protein is 5'-methylthioadenosine/S-adenosylhomocysteine nucleosidase.